The primary structure comprises 128 residues: Large ribosomal subunit protein bL12 (128 aa).

This sequence belongs to the bacterial ribosomal protein bL12 family. In terms of assembly, homodimer. Part of the ribosomal stalk of the 50S ribosomal subunit. Forms a multimeric L10(L12)X complex, where L10 forms an elongated spine to which 2 to 4 L12 dimers bind in a sequential fashion. Binds GTP-bound translation factors.

Functionally, forms part of the ribosomal stalk which helps the ribosome interact with GTP-bound translation factors. Is thus essential for accurate translation. This is Large ribosomal subunit protein bL12 from Acidithiobacillus ferrooxidans (strain ATCC 23270 / DSM 14882 / CIP 104768 / NCIMB 8455) (Ferrobacillus ferrooxidans (strain ATCC 23270)).